The sequence spans 508 residues: Photosystem II CP47 reaction center protein (508 aa).

6 consecutive transmembrane segments (helical) span residues 21–36 (AVHLMHTALVAGWAGS), 101–115 (IVLSGLLFLAAVWHW), 140–156 (GIHLFLSGLLCFGFGAF), 203–218 (IAAGVVGIVAGLFHLT), 237–252 (VLSSSLAAVFFAAFVV), and 457–472 (SFALLFFFGHIWHGSR).

Belongs to the PsbB/PsbC family. PsbB subfamily. As to quaternary structure, PSII is composed of 1 copy each of membrane proteins PsbA, PsbB, PsbC, PsbD, PsbE, PsbF, PsbH, PsbI, PsbJ, PsbK, PsbL, PsbM, PsbT, PsbX, PsbY, PsbZ, Psb30/Ycf12, peripheral proteins PsbO, CyanoQ (PsbQ), PsbU, PsbV and a large number of cofactors. It forms dimeric complexes. The cofactor is Binds multiple chlorophylls. PSII binds additional chlorophylls, carotenoids and specific lipids..

Its subcellular location is the cellular thylakoid membrane. Functionally, one of the components of the core complex of photosystem II (PSII). It binds chlorophyll and helps catalyze the primary light-induced photochemical processes of PSII. PSII is a light-driven water:plastoquinone oxidoreductase, using light energy to abstract electrons from H(2)O, generating O(2) and a proton gradient subsequently used for ATP formation. The chain is Photosystem II CP47 reaction center protein from Synechococcus elongatus (strain ATCC 33912 / PCC 7942 / FACHB-805) (Anacystis nidulans R2).